Consider the following 354-residue polypeptide: Protein RecA (354 aa).

ATP is bound at residue glycine 67–threonine 74.

This sequence belongs to the RecA family.

Its subcellular location is the cytoplasm. Can catalyze the hydrolysis of ATP in the presence of single-stranded DNA, the ATP-dependent uptake of single-stranded DNA by duplex DNA, and the ATP-dependent hybridization of homologous single-stranded DNAs. It interacts with LexA causing its activation and leading to its autocatalytic cleavage. The sequence is that of Protein RecA from Haemophilus influenzae (strain 86-028NP).